Consider the following 100-residue polypeptide: Noncompact myelin-associated protein (100 aa).

The Extracellular segment spans residues Met-1–Gly-28. Residues Ala-29–Leu-49 traverse the membrane as a helical segment. At Lys-50–Arg-100 the chain is on the cytoplasmic side. The segment at Thr-58 to Arg-100 is disordered. The span at Pro-77 to Ala-87 shows a compositional bias: polar residues.

In terms of processing, glycosylated. In terms of tissue distribution, expressed in the peripheral nervous system Schwann cells (at protein level).

It localises to the cell membrane. Its function is as follows. Plays a role in myelin formation. The protein is Noncompact myelin-associated protein (Ncmap) of Rattus norvegicus (Rat).